The primary structure comprises 62 residues: Large ribosomal subunit protein bL32 (62 aa).

The segment covering Met-1–Arg-16 has biased composition (basic residues). The interval Met-1–Ala-62 is disordered. Residues Val-28–Leu-44 are compositionally biased toward basic and acidic residues.

Belongs to the bacterial ribosomal protein bL32 family.

The protein is Large ribosomal subunit protein bL32 of Methylocella silvestris (strain DSM 15510 / CIP 108128 / LMG 27833 / NCIMB 13906 / BL2).